The chain runs to 307 residues: Aspartate carbamoyltransferase catalytic subunit (307 aa).

Residues Arg-58 and Thr-59 each coordinate carbamoyl phosphate. Lys-86 provides a ligand contact to L-aspartate. Positions 108, 136, and 139 each coordinate carbamoyl phosphate. L-aspartate is bound by residues Arg-169 and Arg-223. Gly-264 and Pro-265 together coordinate carbamoyl phosphate.

This sequence belongs to the aspartate/ornithine carbamoyltransferase superfamily. ATCase family. Heterododecamer (2C3:3R2) of six catalytic PyrB chains organized as two trimers (C3), and six regulatory PyrI chains organized as three dimers (R2).

It carries out the reaction carbamoyl phosphate + L-aspartate = N-carbamoyl-L-aspartate + phosphate + H(+). It participates in pyrimidine metabolism; UMP biosynthesis via de novo pathway; (S)-dihydroorotate from bicarbonate: step 2/3. Its function is as follows. Catalyzes the condensation of carbamoyl phosphate and aspartate to form carbamoyl aspartate and inorganic phosphate, the committed step in the de novo pyrimidine nucleotide biosynthesis pathway. This is Aspartate carbamoyltransferase catalytic subunit from Moorella thermoacetica (strain ATCC 39073 / JCM 9320).